Here is a 199-residue protein sequence, read N- to C-terminus: Transgelin-2 (199 aa).

A2 is subject to N-acetylalanine. The residue at position 11 (S11) is a Phosphoserine. An N6-acetyllysine mark is found at K17 and K20. A Calponin-homology (CH) domain is found at 24–136 (ADLEQILIQW…RTLMNLGGLA (113 aa)). S163 is subject to Phosphoserine. A Glycyl lysine isopeptide (Lys-Gly) (interchain with G-Cter in SUMO2) cross-link involves residue K171. The stretch at 174–199 (IGLQMGTNRGASQAGMTGYGMPRQIL) is one Calponin-like repeat. T180 is modified (phosphothreonine). R182 and R196 each carry omega-N-methylarginine.

This sequence belongs to the calponin family. Expressed in epididymis (at protein level).

The polypeptide is Transgelin-2 (TAGLN2) (Homo sapiens (Human)).